Consider the following 102-residue polypeptide: NADH-quinone oxidoreductase subunit K (102 aa).

The next 3 membrane-spanning stretches (helical) occupy residues 5-25 (IAHY…GIFL), 31-51 (IVIL…FVAF), and 66-86 (FVLT…VVFF).

This sequence belongs to the complex I subunit 4L family. As to quaternary structure, NDH-1 is composed of 14 different subunits. Subunits NuoA, H, J, K, L, M, N constitute the membrane sector of the complex.

It is found in the cell inner membrane. The catalysed reaction is a quinone + NADH + 5 H(+)(in) = a quinol + NAD(+) + 4 H(+)(out). In terms of biological role, NDH-1 shuttles electrons from NADH, via FMN and iron-sulfur (Fe-S) centers, to quinones in the respiratory chain. The immediate electron acceptor for the enzyme in this species is believed to be ubiquinone. Couples the redox reaction to proton translocation (for every two electrons transferred, four hydrogen ions are translocated across the cytoplasmic membrane), and thus conserves the redox energy in a proton gradient. The chain is NADH-quinone oxidoreductase subunit K from Mesorhizobium japonicum (strain LMG 29417 / CECT 9101 / MAFF 303099) (Mesorhizobium loti (strain MAFF 303099)).